A 547-amino-acid polypeptide reads, in one-letter code: Apolipoprotein N-acyltransferase (547 aa).

The next 5 helical transmembrane spans lie at 31–51 (ILSGILVGTSYIPFPPWALIF), 71–91 (FWAGWVTQFILTLIGFHWIAY), 106–126 (LALLLFCAFMHLYIPVAVAAG), 180–200 (LVGFHGLSAVVLLFNAWMGYV), and 210–230 (ALSHLSLLALTFAALVGWGFW). One can recognise a CN hydrolase domain in the interval 247–515 (VQANIGNLEK…KYLKNAPLTF (269 aa)). Catalysis depends on E294, which acts as the Proton acceptor. Residue K364 is part of the active site. The Nucleophile role is filled by C418. A helical membrane pass occupies residues 515–535 (FFVQWGHWDWIVILLVLGAVI).

Belongs to the CN hydrolase family. Apolipoprotein N-acyltransferase subfamily.

The protein localises to the cell inner membrane. The catalysed reaction is N-terminal S-1,2-diacyl-sn-glyceryl-L-cysteinyl-[lipoprotein] + a glycerophospholipid = N-acyl-S-1,2-diacyl-sn-glyceryl-L-cysteinyl-[lipoprotein] + a 2-acyl-sn-glycero-3-phospholipid + H(+). It functions in the pathway protein modification; lipoprotein biosynthesis (N-acyl transfer). Catalyzes the phospholipid dependent N-acylation of the N-terminal cysteine of apolipoprotein, the last step in lipoprotein maturation. In Bdellovibrio bacteriovorus (strain ATCC 15356 / DSM 50701 / NCIMB 9529 / HD100), this protein is Apolipoprotein N-acyltransferase.